The chain runs to 467 residues: Bifunctional protein GlmU (467 aa).

Positions M1–R229 are pyrophosphorylase. Residues L8–G11, K22, Q72, G77–T78, S100–D102, G139, E154, N169, and N227 contribute to the UDP-N-acetyl-alpha-D-glucosamine site. Residue D102 participates in Mg(2+) binding. N227 is a Mg(2+) binding site. The segment at L230–N250 is linker. Residues G251 to K467 form an N-acetyltransferase region. Positions 332 and 350 each coordinate UDP-N-acetyl-alpha-D-glucosamine. The Proton acceptor role is filled by H362. Positions 365 and 376 each coordinate UDP-N-acetyl-alpha-D-glucosamine. Residues N385 to Y386, S404, A422, and R439 each bind acetyl-CoA.

It in the N-terminal section; belongs to the N-acetylglucosamine-1-phosphate uridyltransferase family. This sequence in the C-terminal section; belongs to the transferase hexapeptide repeat family. In terms of assembly, homotrimer. The cofactor is Mg(2+).

It localises to the cytoplasm. It catalyses the reaction alpha-D-glucosamine 1-phosphate + acetyl-CoA = N-acetyl-alpha-D-glucosamine 1-phosphate + CoA + H(+). The enzyme catalyses N-acetyl-alpha-D-glucosamine 1-phosphate + UTP + H(+) = UDP-N-acetyl-alpha-D-glucosamine + diphosphate. It participates in nucleotide-sugar biosynthesis; UDP-N-acetyl-alpha-D-glucosamine biosynthesis; N-acetyl-alpha-D-glucosamine 1-phosphate from alpha-D-glucosamine 6-phosphate (route II): step 2/2. Its pathway is nucleotide-sugar biosynthesis; UDP-N-acetyl-alpha-D-glucosamine biosynthesis; UDP-N-acetyl-alpha-D-glucosamine from N-acetyl-alpha-D-glucosamine 1-phosphate: step 1/1. It functions in the pathway bacterial outer membrane biogenesis; LPS lipid A biosynthesis. Functionally, catalyzes the last two sequential reactions in the de novo biosynthetic pathway for UDP-N-acetylglucosamine (UDP-GlcNAc). The C-terminal domain catalyzes the transfer of acetyl group from acetyl coenzyme A to glucosamine-1-phosphate (GlcN-1-P) to produce N-acetylglucosamine-1-phosphate (GlcNAc-1-P), which is converted into UDP-GlcNAc by the transfer of uridine 5-monophosphate (from uridine 5-triphosphate), a reaction catalyzed by the N-terminal domain. In Pediococcus pentosaceus (strain ATCC 25745 / CCUG 21536 / LMG 10740 / 183-1w), this protein is Bifunctional protein GlmU.